Consider the following 267-residue polypeptide: Diphthine--ammonia ligase (267 aa).

Tyr-97 carries the phosphotyrosine modification.

This sequence belongs to the Diphthine--ammonia ligase family.

It carries out the reaction diphthine-[translation elongation factor 2] + NH4(+) + ATP = diphthamide-[translation elongation factor 2] + AMP + diphosphate + H(+). It functions in the pathway protein modification; peptidyl-diphthamide biosynthesis. In terms of biological role, amidase that may catalyze the last step of diphthamide biosynthesis using ammonium and ATP. Diphthamide biosynthesis consists in the conversion of an L-histidine residue in the translation elongation factor (EEF2) to diphthamide. In Homo sapiens (Human), this protein is Diphthine--ammonia ligase.